A 68-amino-acid polypeptide reads, in one-letter code: MPKLKTKSAVKKRFSLSSSGKLKVTQAGKRHFMRRRTKKQLRNLRGTTTLIGQDAKNIIKYLMPYGVQ.

The protein belongs to the bacterial ribosomal protein bL35 family.

The sequence is that of Large ribosomal subunit protein bL35 from Orientia tsutsugamushi (strain Ikeda) (Rickettsia tsutsugamushi).